A 717-amino-acid chain; its full sequence is MFETHKVEIEWAGRPLKLETGKIARQADGAVLATYGETVVLATVVSAKAPKPGQDFFPLTVNYQEKTYAAGKIPGGYFKREGRPSENETLVSRLIDRPIRPLFPDGYKNDTQVIITVMQHDLENNPDVVAMVAASAALTLSGVPFMGPVGGARVGYINGEYVLNPHLDEMDESTLDLVVAGTQEAVLMVESEAKELPEDVMLGAVVFGQKGFQPVIDAVIRLAEVAAKEPREFNPEDHSALENAMLSIAEDELRNAYKITEKAARYAAVDAVKAKVKEHFLPEGVENPAHTAEEIAAVFKHLQAKIVRWNILDTKSRIDGRDLVTVRPIVAEVGILPRTHGSALFTRGETQAIVVATLGTGEDEQYVDSLTGMYKENFMLHYNFPPYSVGETGRMGSPGRREIGHGKLAWRAIHPMLPTAEQFPYTLRVVSEITESNGSSSMATVCGTSLALMDAGVPLAKPVAGIAMGLIKEDDRFAVLSDILGDEDHLGDMDFKVAGTDAGITSLQMDIKIEGITEEIMGVALNQAKGGRLHILGEMAKAISESRGQLGEFAPRIEVMNIPVDKIREVIGSGGKVIREIVEKTGAKINIDDDGTVKIASASAKEIEAARKWIHSIVAEPEVGQVYEGTVVKTADFGAFVNFFGARDGLVHISQLASERVAKTTDVVKEGDKVWVKLMGFDERGKVRLSMKVVDQATGKEVVAEKSEKKDGGEAAE.

Positions 488 and 494 each coordinate Mg(2+). One can recognise a KH domain in the interval proline 555–isoleucine 614. One can recognise an S1 motif domain in the interval glycine 624–lysine 692.

Belongs to the polyribonucleotide nucleotidyltransferase family. Mg(2+) is required as a cofactor.

It is found in the cytoplasm. It catalyses the reaction RNA(n+1) + phosphate = RNA(n) + a ribonucleoside 5'-diphosphate. Its function is as follows. Involved in mRNA degradation. Catalyzes the phosphorolysis of single-stranded polyribonucleotides processively in the 3'- to 5'-direction. The polypeptide is Polyribonucleotide nucleotidyltransferase (Rhizobium meliloti (strain 1021) (Ensifer meliloti)).